Reading from the N-terminus, the 139-residue chain is Small ribosomal subunit protein uS12 (139 aa).

Residues 12–55 (RVDKVKKSDSPALNKGYNSFKKSQTDVSSPQKRGVCTRVGTMTP) form a disordered region. A compositionally biased stretch (polar residues) spans 27 to 42 (GYNSFKKSQTDVSSPQ). At Asp102 the chain carries 3-methylthioaspartic acid. Residues 119-139 (GVQNRMQGRSKYGTKKPKDKK) form a disordered region. Residues 130-139 (YGTKKPKDKK) show a composition bias toward basic residues.

The protein belongs to the universal ribosomal protein uS12 family. Part of the 30S ribosomal subunit. Contacts proteins S8 and S17. May interact with IF1 in the 30S initiation complex.

With S4 and S5 plays an important role in translational accuracy. In terms of biological role, interacts with and stabilizes bases of the 16S rRNA that are involved in tRNA selection in the A site and with the mRNA backbone. Located at the interface of the 30S and 50S subunits, it traverses the body of the 30S subunit contacting proteins on the other side and probably holding the rRNA structure together. The combined cluster of proteins S8, S12 and S17 appears to hold together the shoulder and platform of the 30S subunit. This is Small ribosomal subunit protein uS12 from Shouchella clausii (strain KSM-K16) (Alkalihalobacillus clausii).